A 173-amino-acid polypeptide reads, in one-letter code: Small ribosomal subunit protein uS7 (173 aa).

Belongs to the universal ribosomal protein uS7 family. Part of the 30S ribosomal subunit. Contacts proteins S9 and S11.

In terms of biological role, one of the primary rRNA binding proteins, it binds directly to 16S rRNA where it nucleates assembly of the head domain of the 30S subunit. Is located at the subunit interface close to the decoding center, probably blocks exit of the E-site tRNA. This is Small ribosomal subunit protein uS7 from Orientia tsutsugamushi (strain Ikeda) (Rickettsia tsutsugamushi).